The primary structure comprises 861 residues: Benzylsuccinate synthase alpha subunit (861 aa).

Residues 40–712 (TERTRRLKAR…QAVGLYMEVG (673 aa)) enclose the PFL domain. The tract at residues 718-744 (TPDGRFGGEAADDGGISPYSGTDKKGP) is disordered. Positions 731-850 (GGISPYSGTD…IIARNEQNFN (120 aa)) constitute a Glycine radical domain. G825 carries the post-translational modification Glycine radical.

The protein belongs to the glycyl radical enzyme (GRE) family. BSS subfamily. Heterohexamer composed of 2 alpha subunits, 2 beta subunits and 2 gamma subunits.

The enzyme catalyses toluene + fumarate = 2-benzylsuccinate. It functions in the pathway xenobiotic degradation; toluene degradation. Activated by the benzylsuccinate synthase activating enzyme BssD. Rapidly inactivated by oxygen. Catalyzes the addition of fumarate to the methyl group of toluene, leading to the formation of benzylsuccinate. This chain is Benzylsuccinate synthase alpha subunit (bssA), found in Thauera aromatica.